A 90-amino-acid chain; its full sequence is Small ribosomal subunit protein bS16 (90 aa).

The protein belongs to the bacterial ribosomal protein bS16 family.

The chain is Small ribosomal subunit protein bS16 from Bacillus velezensis (strain DSM 23117 / BGSC 10A6 / LMG 26770 / FZB42) (Bacillus amyloliquefaciens subsp. plantarum).